The chain runs to 492 residues: Probable ATP-citrate synthase subunit 2 (492 aa).

Ser-24 carries the phosphoserine modification.

It in the N-terminal section; belongs to the succinate/malate CoA ligase beta subunit family. This sequence in the C-terminal section; belongs to the succinate/malate CoA ligase alpha subunit family. Composed of two subunits.

It is found in the cytoplasm. It localises to the nucleus. It catalyses the reaction oxaloacetate + acetyl-CoA + ADP + phosphate = citrate + ATP + CoA. Functionally, ATP citrate-lyase is the primary enzyme responsible for the synthesis of cytosolic acetyl-CoA. Has a central role in de novo lipid synthesis. The protein is Probable ATP-citrate synthase subunit 2 of Schizosaccharomyces pombe (strain 972 / ATCC 24843) (Fission yeast).